The primary structure comprises 462 residues: ATP synthase subunit beta (462 aa).

ATP is bound at residue 151–158 (GGAGVGKT).

It belongs to the ATPase alpha/beta chains family. As to quaternary structure, F-type ATPases have 2 components, CF(1) - the catalytic core - and CF(0) - the membrane proton channel. CF(1) has five subunits: alpha(3), beta(3), gamma(1), delta(1), epsilon(1). CF(0) has four main subunits: a(1), b(1), b'(1) and c(9-12).

Its subcellular location is the cell inner membrane. The enzyme catalyses ATP + H2O + 4 H(+)(in) = ADP + phosphate + 5 H(+)(out). In terms of biological role, produces ATP from ADP in the presence of a proton gradient across the membrane. The catalytic sites are hosted primarily by the beta subunits. The sequence is that of ATP synthase subunit beta from Chlorobium phaeovibrioides (strain DSM 265 / 1930) (Prosthecochloris vibrioformis (strain DSM 265)).